Consider the following 223-residue polypeptide: uncharacterized protein (223 aa).

Positions 29-220 constitute a Tyr recombinase domain; sequence KQTYKMFKED…AKEILKNIGD (192 aa). Catalysis depends on residues R71, K103, H170, R173, and H196. Y205 functions as the O-(3'-phospho-DNA)-tyrosine intermediate in the catalytic mechanism.

It belongs to the 'phage' integrase family.

This is an uncharacterized protein from Methanocaldococcus jannaschii (strain ATCC 43067 / DSM 2661 / JAL-1 / JCM 10045 / NBRC 100440) (Methanococcus jannaschii).